A 1410-amino-acid chain; its full sequence is Ribosome-binding protein 1 (1410 aa).

Residues 1 to 7 (MDIYDTQ) lie on the Lumenal side of the membrane. The helical transmembrane segment at 8–28 (TLGVVVFGGFMVVSAIGIFLV) threads the bilayer. The Cytoplasmic portion of the chain corresponds to 29–1410 (STFSMKETSY…GSSSKEGTSV (1382 aa)). Disordered regions lie at residues 44 to 90 (NQRK…DPAP) and 129 to 152 (QEKLASSPKDKKKKEKKVAKVEPA). A compositionally biased stretch (basic residues) spans 52–63 (THHQKVEKKKKE). A compositionally biased stretch (basic and acidic residues) spans 64–88 (KTVEKKGKTKKKEEKPNGKIPDHDP). K148 is covalently cross-linked (Glycyl lysine isopeptide (Lys-Gly) (interchain with G-Cter in SUMO2)). Phosphoserine is present on residues S159 and S165. 2 disordered regions span residues 173 to 648 (APKE…PLYL) and 895 to 925 (QSSHASLRADAEKAQEQQQQMAELHSKLQSS). Polar residues-rich tracts occupy residues 191-209 (TPATGTTQGKKAEGTQNQS) and 225-238 (TPNQGKKTEGTPNQ). 33 tandem repeats follow at residues 197-206 (TQGKKAEGTQ), 207-216 (NQSKKAEGAP), 217-226 (NQGRKAEGTP), 227-236 (NQGKKTEGTP), 237-246 (NQGKKAEGTP), 247-256 (NQGKKAEGTP), 257-266 (NQGKKAEGAQ), 267-276 (NQGKKVDTTP), 277-286 (NQGKKVEGAP), 287-296 (TQGRKAEGAQ), 297-306 (NQAKKVEGAQ), 307-316 (NQGKKAEGAQ), 317-326 (NQGKKGEGAQ), 327-336 (NQGKKAEGAQ), 337-346 (NQGKKAEGAQ), 347-356 (NQGKKAEGAQ), 357-366 (NQGKKAEGAQ), 367-376 (NQGKKAEGAQ), 377-386 (NQGKKAEGAQ), 387-396 (NQGKKVEGAQ), 397-406 (NQGKKAEGAQ), 407-416 (NQGKKAEGAQ), 417-426 (NQGKKAEGAQ), 427-436 (NQGKKAEGAQ), 437-446 (NQGKKAEGAQ), 447-456 (NQGKKAEGAQ), 457-466 (NQGKKAEGAQ), 467-476 (NQGKKVEGAQ), 477-486 (NQGKKAEGAQ), 487-496 (NQGKKAEGAQ), 497-506 (NQGKKAEGAQ), 507-516 (NQGQKGEGAQ), and 517-526 (NQGKKTEGAQ). A 41 X 10 AA approximate tandem repeats of [TN]-Q-[GSA]-[KRQT]-K-[ATGSV]-[ED]-[GTAS]-[ATIS]-[PQTAS] region spans residues 197–604 (TQGKKAEGTQ…NQGKKTESAS (408 aa)). Phosphothreonine is present on residues T225, T235, T245, and T255. Polar residues-rich tracts occupy residues 265–278 (AQNQGKKVDTTPNQ) and 295–519 (AQNQ…QNQG). Positions 520–532 (KKTEGAQGKKAER) are enriched in basic and acidic residues. The 34; approximate repeat unit spans residues 527 to 534 (GKKAERSP). At S533 the chain carries Phosphoserine. Repeat unit 35 spans residues 535 to 544 (NQGKKGEGAP). A 36; approximate repeat occupies 545 to 554 (IQGKKADSVA). Residues 553–567 (VANQGTKVEGITNQG) are compositionally biased toward polar residues. Tandem repeats lie at residues 555 to 564 (NQGTKVEGIT) and 565 to 574 (NQGKKAEGSP). Over residues 568 to 581 (KKAEGSPSEGKKAE) the composition is skewed to basic and acidic residues. S573 and S583 each carry phosphoserine. The stretch at 575 to 584 (SEGKKAEGSP) is one 39; approximate repeat. Tandem repeats lie at residues 585 to 594 (NQGKKADAAA) and 595 to 604 (NQGKKTESAS). A compositionally biased stretch (polar residues) spans 602-612 (SASVQGRNTDV). A Phosphoserine modification is found at S615. K620 participates in a covalent cross-link: Glycyl lysine isopeptide (Lys-Gly) (interchain with G-Cter in SUMO1). Position 900 is a phosphoserine (S900). The residue at position 932 (K932) is an N6-acetyllysine. Phosphoserine occurs at positions 959 and 978. Disordered regions lie at residues 1093 to 1122 (GPTLLKHPPAPAEPSSDLASKLREAEETQS), 1260 to 1287 (EMKSHVEDGDIAGAPASSPEAPPAEQDP), 1330 to 1362 (EKLRTAGPLESSETEEASQLKERLEKEKKLTSD), and 1378 to 1410 (QEQLAREKDTVKKLQEQLEKAEDGSSSKEGTSV). Phosphoserine is present on residues S1276 and S1277. Basic and acidic residues-rich tracts occupy residues 1347–1360 (SQLKERLEKEKKLT) and 1381–1403 (LAREKDTVKKLQEQLEKAEDGSS).

The protein localises to the endoplasmic reticulum membrane. Functionally, acts as a ribosome receptor and mediates interaction between the ribosome and the endoplasmic reticulum membrane. This Homo sapiens (Human) protein is Ribosome-binding protein 1 (RRBP1).